Here is a 532-residue protein sequence, read N- to C-terminus: Ankyrin repeat-containing protein At2g01680 (532 aa).

7 ANK repeats span residues 9 to 38 (LTHQ…GDEL), 58 to 89 (AGET…TVKI), 93 to 122 (SDMN…ELCR), 127 to 156 (SNTS…SCAM), 161 to 190 (NGKT…AIVG), 195 to 224 (KGQT…TILN), and 229 to 259 (KGNT…EVNA). The next 4 helical transmembrane spans lie at 354-374 (ITVV…NLPG), 396-416 (VFCL…VVQI), 436-456 (LMWA…FAVV), and 467-487 (ITLL…YFVF).

It is found in the membrane. The polypeptide is Ankyrin repeat-containing protein At2g01680 (Arabidopsis thaliana (Mouse-ear cress)).